A 121-amino-acid polypeptide reads, in one-letter code: Large ribosomal subunit protein bL12 (121 aa).

This sequence belongs to the bacterial ribosomal protein bL12 family. In terms of assembly, homodimer. Part of the ribosomal stalk of the 50S ribosomal subunit. Forms a multimeric L10(L12)X complex, where L10 forms an elongated spine to which 2 to 4 L12 dimers bind in a sequential fashion. Binds GTP-bound translation factors.

Its function is as follows. Forms part of the ribosomal stalk which helps the ribosome interact with GTP-bound translation factors. Is thus essential for accurate translation. In Alkaliphilus oremlandii (strain OhILAs) (Clostridium oremlandii (strain OhILAs)), this protein is Large ribosomal subunit protein bL12.